Consider the following 148-residue polypeptide: Proline-rich protein 13 (148 aa).

The disordered stretch occupies residues 1–148 (MWNPNAGQPG…SSSSSSSDSD (148 aa)). Composition is skewed to pro residues over residues 27–67 (AHPP…PQPG) and 75–93 (GPYPPPYPPPAPGIPPVNP). Residues 109–135 (MQKKMKKAHKKMHKHQKHHKYHKHGKH) are compositionally biased toward basic residues. Residues 136-148 (SSSSSSSSSSDSD) show a composition bias toward low complexity.

It localises to the nucleus. Its function is as follows. Negatively regulates TSP1 expression at the level of transcription. This down-regulation was shown to reduce taxane-induced apoptosis. This is Proline-rich protein 13 (PRR13) from Homo sapiens (Human).